Reading from the N-terminus, the 93-residue chain is Small ribosomal subunit protein uS19 (93 aa).

Belongs to the universal ribosomal protein uS19 family.

Protein S19 forms a complex with S13 that binds strongly to the 16S ribosomal RNA. The polypeptide is Small ribosomal subunit protein uS19 (Acidothermus cellulolyticus (strain ATCC 43068 / DSM 8971 / 11B)).